A 245-amino-acid polypeptide reads, in one-letter code: MKVKVVDALGFSYIFKTLSQYVSEATLLFGNDGFKVKGMDPSKVVYIDIFVPKDYFEEYNLENEMKIGVSLKDVNEVIKNVSKEDILYLELEKDKIMFTLDGEYLRTFSLPVLSPDEVETPSINLEFPFRANILTSTFGDLLDEFDQIGGDSIRFKAQNGKLYLSVMGDMGESIVELSLENGGLLESTGTDAESLYGLEHVSNTTKMRRPSDTLEIAFGSQLPLKLRYNLPKGGYADFYIAPRSE.

Belongs to the PCNA family. As to quaternary structure, homotrimer. The subunits circularize to form a toroid; DNA passes through its center. Replication factor C (RFC) is required to load the toroid on the DNA.

Functionally, sliding clamp subunit that acts as a moving platform for DNA processing. Responsible for tethering the catalytic subunit of DNA polymerase and other proteins to DNA during high-speed replication. In Sulfolobus acidocaldarius (strain ATCC 33909 / DSM 639 / JCM 8929 / NBRC 15157 / NCIMB 11770), this protein is DNA polymerase sliding clamp 2.